Reading from the N-terminus, the 638-residue chain is Chaperone protein HtpG (638 aa).

Residues methionine 1–arginine 344 form an a; substrate-binding region. Residues glutamate 345–lysine 560 are b. Positions leucine 561 to asparagine 638 are c.

This sequence belongs to the heat shock protein 90 family. As to quaternary structure, homodimer.

The protein localises to the cytoplasm. Molecular chaperone. Has ATPase activity. This Wigglesworthia glossinidia brevipalpis protein is Chaperone protein HtpG.